The chain runs to 239 residues: Probable transcriptional regulatory protein BCAH187_A0615 (239 aa).

Belongs to the TACO1 family. YeeN subfamily.

The protein resides in the cytoplasm. The polypeptide is Probable transcriptional regulatory protein BCAH187_A0615 (Bacillus cereus (strain AH187)).